Consider the following 483-residue polypeptide: Cobyric acid synthase (483 aa).

The GATase cobBQ-type domain maps to 248–435 (LLKVVVPVLP…LHGLFETPAA (188 aa)). Cysteine 329 functions as the Nucleophile in the catalytic mechanism. Histidine 427 is an active-site residue.

This sequence belongs to the CobB/CobQ family. CobQ subfamily.

The protein operates within cofactor biosynthesis; adenosylcobalamin biosynthesis. Its function is as follows. Catalyzes amidations at positions B, D, E, and G on adenosylcobyrinic A,C-diamide. NH(2) groups are provided by glutamine, and one molecule of ATP is hydrogenolyzed for each amidation. This is Cobyric acid synthase from Pseudomonas fluorescens (strain ATCC BAA-477 / NRRL B-23932 / Pf-5).